We begin with the raw amino-acid sequence, 393 residues long: Chorismate synthase (393 aa).

NADP(+) is bound by residues Arg40 and Arg46. FMN is bound by residues 129–131, 249–250, Gly301, 316–320, and Arg342; these read RSS, QA, and KPIPT.

This sequence belongs to the chorismate synthase family. As to quaternary structure, homotetramer. The cofactor is FMNH2.

It carries out the reaction 5-O-(1-carboxyvinyl)-3-phosphoshikimate = chorismate + phosphate. It functions in the pathway metabolic intermediate biosynthesis; chorismate biosynthesis; chorismate from D-erythrose 4-phosphate and phosphoenolpyruvate: step 7/7. Its function is as follows. Catalyzes the anti-1,4-elimination of the C-3 phosphate and the C-6 proR hydrogen from 5-enolpyruvylshikimate-3-phosphate (EPSP) to yield chorismate, which is the branch point compound that serves as the starting substrate for the three terminal pathways of aromatic amino acid biosynthesis. This reaction introduces a second double bond into the aromatic ring system. The sequence is that of Chorismate synthase from Geotalea uraniireducens (strain Rf4) (Geobacter uraniireducens).